Consider the following 65-residue polypeptide: Large ribosomal subunit protein bL35 (65 aa).

This sequence belongs to the bacterial ribosomal protein bL35 family.

The polypeptide is Large ribosomal subunit protein bL35 (Laribacter hongkongensis (strain HLHK9)).